A 518-amino-acid chain; its full sequence is D-aminopeptidase (518 aa).

The Nucleophile role is filled by Ser62. Lys65 serves as the catalytic Proton donor/acceptor. Positions 373 to 392 (FGTGPEKMDISGENEAQSSM) are disordered. The tract at residues 477–487 (QRSMDAPSPGE) is important for specificity. Residue Asp481 participates in substrate binding.

It belongs to the peptidase S12 family. As to quaternary structure, homodimer.

It catalyses the reaction Release of an N-terminal D-amino acid from a peptide, Xaa-|-Yaa-, in which Xaa is preferably D-Ala, D-Ser or D-Thr. D-amino acid amides and methyl esters also are hydrolyzed, as is glycine amide.. Inhibited by beta-lactam compounds such as 6-aminopenicillic acid, 7-aminocephalosporanic acid, benzylpenicillin and ampicillin. Inhibited by p-chloromercuribenzoate. Its function is as follows. Hydrolyzes N-terminal residues in D-amino acid-containing peptides. In Brucella melitensis biotype 2 (strain ATCC 23457), this protein is D-aminopeptidase.